The chain runs to 399 residues: Phospholipase C (399 aa).

The signal sequence occupies residues 1–28; sequence MNKKKILKFICSAVLSFTLFSGYKSYAW. 9 residues coordinate Zn(2+): Trp28, His38, Asp83, His95, His153, Asp157, His163, His175, and Glu179. A Zn-dependent PLC domain is found at 29–277; the sequence is DGKVDGTGTH…NEVSGTINTT (249 aa). The linker stretch occupies residues 275–282; that stretch reads NTTENSKI. In terms of domain architecture, PLAT spans 283–399; that stretch reads NEIMVVIKTA…DNKTFYINNK (117 aa). Gly298, Thr299, Asp300, Asp320, Asn321, Gly323, Asn324, Asp325, and Asp363 together coordinate Ca(2+).

It belongs to the bacterial zinc-metallophospholipase C family. Ca(2+) is required as a cofactor. It depends on Zn(2+) as a cofactor.

It localises to the secreted. The enzyme catalyses a 1,2-diacyl-sn-glycero-3-phosphocholine + H2O = phosphocholine + a 1,2-diacyl-sn-glycerol + H(+). Bacterial hemolysins are exotoxins that attack blood cell membranes and cause cell rupture. Binds to eukaryotic membranes where it hydrolyzes phosphatidylcholine, sphingomyelin and phosphatidylethanolamine. The diacylglycerol produced can activate both the arachidonic acid pathway, leading to modulation of the inflammatory response cascade and thrombosis, and protein kinase C, leading to activation of eukaryotic phospholipases and further membrane damage. The polypeptide is Phospholipase C (plc) (Clostridium haemolyticum).